Reading from the N-terminus, the 563-residue chain is Arginine--tRNA ligase (563 aa).

A 'HIGH' region motif is present at residues 120-130 (PNIAKPFHIGH).

This sequence belongs to the class-I aminoacyl-tRNA synthetase family. As to quaternary structure, monomer.

It localises to the cytoplasm. It catalyses the reaction tRNA(Arg) + L-arginine + ATP = L-arginyl-tRNA(Arg) + AMP + diphosphate. In Clostridium botulinum (strain Okra / Type B1), this protein is Arginine--tRNA ligase.